Here is a 289-residue protein sequence, read N- to C-terminus: LysM and putative peptidoglycan-binding domain-containing protein 4 (289 aa).

The segment at 1 to 23 (MRLREGPTHSFQPPSSVHSSLGS) is disordered. The Extracellular segment spans residues 1–208 (MRLREGPTHS…PASGADWGIR (208 aa)). A compositionally biased stretch (polar residues) spans 9 to 23 (HSFQPPSSVHSSLGS). N-linked (GlcNAc...) asparagine glycosylation is found at asparagine 30 and asparagine 59. Residues 71-115 (LERAITEDDNLNKLALQYGCKVSDIKRVNNLITDQDIYALKTIKI) enclose the LysM domain. 2 N-linked (GlcNAc...) asparagine glycosylation sites follow: asparagine 134 and asparagine 178. A helical transmembrane segment spans residues 209–229 (WWNAVFIMLLVGIVLPVFYIV). Residues 230 to 289 (YFKTQGDSEGTFSIEGRTNVSTSLSPHTNTGHSMEQMTQRTSGFSPGLLQDTHKLLNPGG) are Cytoplasmic-facing. The disordered stretch occupies residues 252–272 (SLSPHTNTGHSMEQMTQRTSG).

It localises to the membrane. The sequence is that of LysM and putative peptidoglycan-binding domain-containing protein 4 (lysmd4) from Xenopus laevis (African clawed frog).